The sequence spans 653 residues: Transmembrane and coiled-coil domains protein 1 (653 aa).

The residue at position 1 (methionine 1) is an N-acetylmethionine. 4 disordered regions span residues 1–35 (MEPS…QKLS), 58–78 (HQRR…ADPE), 112–165 (PPKM…APTS), and 204–227 (TSSA…TPDP). The Cytoplasmic portion of the chain corresponds to 1–591 (MEPSGSEQLF…ARNLLGKLIN (591 aa)). Positions 20-34 (QDAEARKQTESEQKL) are enriched in basic and acidic residues. Positions 64–74 (SVSPHDVQQIQ) are enriched in polar residues. A compositionally biased stretch (basic residues) spans 113–125 (PKMKRGTSLHSRR). The segment covering 135-144 (PQINRKSGQE) has biased composition (polar residues). A compositionally biased stretch (low complexity) spans 153-165 (RPRSSSTTDAPTS). The span at 204-218 (TSSAVASSTDGSIHT) shows a compositional bias: polar residues. The stretch at 228–313 (QRTKAAIAHL…RKLREVEQNG (86 aa)) forms a coiled coil. 2 positions are modified to phosphoserine: serine 382 and serine 414. The disordered stretch occupies residues 415–437 (PKYGSEEDCSSATSGSVGANSTT). Over residues 424-437 (SSATSGSVGANSTT) the composition is skewed to polar residues. Positions 458–576 (GFDALLHEIQ…QQQQVVQLEG (119 aa)) form a coiled coil. The next 2 helical transmembrane spans lie at 592 to 612 (ILLA…NCVV) and 625 to 645 (LFLV…FSYV). Residues 646 to 653 (ERFFSSPR) are Cytoplasmic-facing.

Belongs to the TEX28 family. In terms of assembly, may form homodimers and heterodimers with TMCC2 or TMCC3 via the coiled-coil domains. Interacts with ribosomal proteins RPL4 and RPS6.

Its subcellular location is the endoplasmic reticulum membrane. Endoplasmic reticulum membrane protein that promotes endoplasmic reticulum-associated endosome fission. Localizes to contact sites between the endoplasmic reticulum and endosomes and acts by promoting recruitment of the endoplasmic reticulum to endosome tubules for fission. Endosome membrane fission of early and late endosomes is essential to separate regions destined for lysosomal degradation from carriers to be recycled to the plasma membrane. The chain is Transmembrane and coiled-coil domains protein 1 from Homo sapiens (Human).